Here is a 414-residue protein sequence, read N- to C-terminus: Dual-specificity RNA methyltransferase RlmN (414 aa).

A compositionally biased stretch (polar residues) spans 1–13 (MTSAVGISVPNTD). The tract at residues 1 to 22 (MTSAVGISVPNTDAQSSQSASQ) is disordered. The Proton acceptor role is filled by Glu-124. The Radical SAM core domain maps to 134–377 (TGSRKTLCIS…CTIRQTRGDD (244 aa)). Cysteines 141 and 382 form a disulfide. Residues Cys-148, Cys-152, and Cys-155 each coordinate [4Fe-4S] cluster. Residues 204–205 (GE), Ser-236, 258–260 (SLH), and Asn-339 each bind S-adenosyl-L-methionine. The active-site S-methylcysteine intermediate is Cys-382.

Belongs to the radical SAM superfamily. RlmN family. [4Fe-4S] cluster is required as a cofactor.

The protein resides in the cytoplasm. It catalyses the reaction adenosine(2503) in 23S rRNA + 2 reduced [2Fe-2S]-[ferredoxin] + 2 S-adenosyl-L-methionine = 2-methyladenosine(2503) in 23S rRNA + 5'-deoxyadenosine + L-methionine + 2 oxidized [2Fe-2S]-[ferredoxin] + S-adenosyl-L-homocysteine. It carries out the reaction adenosine(37) in tRNA + 2 reduced [2Fe-2S]-[ferredoxin] + 2 S-adenosyl-L-methionine = 2-methyladenosine(37) in tRNA + 5'-deoxyadenosine + L-methionine + 2 oxidized [2Fe-2S]-[ferredoxin] + S-adenosyl-L-homocysteine. Its function is as follows. Specifically methylates position 2 of adenine 2503 in 23S rRNA and position 2 of adenine 37 in tRNAs. m2A2503 modification seems to play a crucial role in the proofreading step occurring at the peptidyl transferase center and thus would serve to optimize ribosomal fidelity. This chain is Dual-specificity RNA methyltransferase RlmN, found in Acinetobacter baylyi (strain ATCC 33305 / BD413 / ADP1).